Here is a 221-residue protein sequence, read N- to C-terminus: Placenta growth factor (221 aa).

Residues 1 to 18 (MPVMRLFPCFLQLLAGLA) form the signal peptide. An N-linked (GlcNAc...) asparagine glycan is attached at asparagine 33. 3 disulfide bridges follow: cysteine 52/cysteine 94, cysteine 83/cysteine 128, and cysteine 87/cysteine 130. N-linked (GlcNAc...) asparagine glycosylation occurs at asparagine 101. The interval 175–221 (QSAVWPSSPVPEEIPRMHPGRNGKKQQRKPLREKMKPERCGDAVPRR) is disordered. The span at 192–203 (HPGRNGKKQQRK) shows a compositional bias: basic residues. Residues 193–213 (PGRNGKKQQRKPLREKMKPER) form a heparin-binding region. Positions 204 to 221 (PLREKMKPERCGDAVPRR) are enriched in basic and acidic residues.

The protein belongs to the PDGF/VEGF growth factor family. In terms of assembly, antiparallel homodimer; disulfide-linked. Also found as heterodimer with VEGFA/VEGF. Isoform PlGF-3 is found both as homodimer and as monomer. In terms of processing, N-glycosylated. As to expression, while the three isoforms are present in most placental tissues, PlGF-2 is specific to early (8 week) placenta and only PlGF-1 is found in the colon and mammary carcinomas.

It localises to the secreted. Growth factor active in angiogenesis and endothelial cell growth, stimulating their proliferation and migration. It binds to the receptor FLT1/VEGFR-1. Isoform PlGF-2 binds NRP1/neuropilin-1 and NRP2/neuropilin-2 in a heparin-dependent manner. Also promotes cell tumor growth. In Homo sapiens (Human), this protein is Placenta growth factor (PGF).